Here is a 393-residue protein sequence, read N- to C-terminus: Sulfate adenylyltransferase (393 aa).

Belongs to the sulfate adenylyltransferase family.

The catalysed reaction is sulfate + ATP + H(+) = adenosine 5'-phosphosulfate + diphosphate. The protein operates within sulfur metabolism; hydrogen sulfide biosynthesis; sulfite from sulfate: step 1/3. This is Sulfate adenylyltransferase from Symbiobacterium thermophilum (strain DSM 24528 / JCM 14929 / IAM 14863 / T).